Consider the following 217-residue polypeptide: ATP phosphoribosyltransferase (217 aa).

It belongs to the ATP phosphoribosyltransferase family. Short subfamily. As to quaternary structure, heteromultimer composed of HisG and HisZ subunits.

It localises to the cytoplasm. It carries out the reaction 1-(5-phospho-beta-D-ribosyl)-ATP + diphosphate = 5-phospho-alpha-D-ribose 1-diphosphate + ATP. Its pathway is amino-acid biosynthesis; L-histidine biosynthesis; L-histidine from 5-phospho-alpha-D-ribose 1-diphosphate: step 1/9. Functionally, catalyzes the condensation of ATP and 5-phosphoribose 1-diphosphate to form N'-(5'-phosphoribosyl)-ATP (PR-ATP). Has a crucial role in the pathway because the rate of histidine biosynthesis seems to be controlled primarily by regulation of HisG enzymatic activity. The sequence is that of ATP phosphoribosyltransferase from Prochlorococcus marinus (strain MIT 9313).